The chain runs to 1306 residues: Clustered mitochondria protein homolog (1306 aa).

A compositionally biased stretch (low complexity) spans 1-11 (MAVNNEVNNAA). Residues 1-47 (MAVNNEVNNAASETPTDVSSSSQKLATEETALTNGADHEEEDGGEAG) are disordered. A compositionally biased stretch (polar residues) spans 12 to 33 (SETPTDVSSSSQKLATEETALT). Positions 336 to 580 (DITRTQENYL…RVTPLDITWM (245 aa)) constitute a Clu domain. 2 disordered regions span residues 630–689 (ERKR…QERI) and 912–956 (KQSQ…SPAA). Residues 656–689 (EPAKSEEPTENGELAKKSESDEAAEPSKPDQERI) show a composition bias toward basic and acidic residues. 3 TPR repeats span residues 1032–1065 (ARVYNSLSMLYYQLDEKEAAMELARKAVIVSERT), 1074–1107 (LLNYLNLGLIAHASGETKLALTYIKHALDLWKVV), and 1116–1149 (ITTINNAAVMLQHLKEYHDSRTWFEASLKICEEV). Positions 1275 to 1306 (FIEGSDQSNQNKKRPGRSNPKRRGGAAATAGK) are disordered. The segment covering 1285-1298 (NKKRPGRSNPKRRG) has biased composition (basic residues).

This sequence belongs to the CLU family. In terms of assembly, may associate with the eukaryotic translation initiation factor 3 (eIF-3) complex.

The protein resides in the cytoplasm. In terms of biological role, mRNA-binding protein involved in proper cytoplasmic distribution of mitochondria. The polypeptide is Clustered mitochondria protein homolog (Botryotinia fuckeliana (strain B05.10) (Noble rot fungus)).